A 61-amino-acid polypeptide reads, in one-letter code: UPF0434 protein PSPPH_1629 (61 aa).

The protein belongs to the UPF0434 family.

The polypeptide is UPF0434 protein PSPPH_1629 (Pseudomonas savastanoi pv. phaseolicola (strain 1448A / Race 6) (Pseudomonas syringae pv. phaseolicola (strain 1448A / Race 6))).